Consider the following 362-residue polypeptide: S-adenosylmethionine decarboxylase proenzyme 2 (362 aa).

Active-site residues include Glu-9 and Glu-12. Glu-68 provides a ligand contact to substrate. Ser-69 (schiff-base intermediate with substrate; via pyruvic acid) is an active-site residue. At Ser-69 the chain carries Pyruvic acid (Ser); by autocatalysis. The active-site Proton donor; for catalytic activity is Cys-83. Active-site proton acceptor; for processing activity residues include Ser-232 and His-245. Position 249 (Glu-249) interacts with substrate.

Belongs to the eukaryotic AdoMetDC family. Pyruvate serves as cofactor. In terms of processing, is synthesized initially as an inactive proenzyme. Formation of the active enzyme involves a self-maturation process in which the active site pyruvoyl group is generated from an internal serine residue via an autocatalytic post-translational modification. Two non-identical subunits are generated from the proenzyme in this reaction, and the pyruvate is formed at the N-terminus of the alpha chain, which is derived from the carboxyl end of the proenzyme. The post-translation cleavage follows an unusual pathway, termed non-hydrolytic serinolysis, in which the side chain hydroxyl group of the serine supplies its oxygen atom to form the C-terminus of the beta chain, while the remainder of the serine residue undergoes an oxidative deamination to produce ammonia and the pyruvoyl group blocking the N-terminus of the alpha chain.

The catalysed reaction is S-adenosyl-L-methionine + H(+) = S-adenosyl 3-(methylsulfanyl)propylamine + CO2. Its pathway is amine and polyamine biosynthesis; S-adenosylmethioninamine biosynthesis; S-adenosylmethioninamine from S-adenosyl-L-methionine: step 1/1. Functionally, essential for biosynthesis of the polyamines spermidine and spermine. Essential for polyamine homeostasis, and normal plant embryogenesis, growth and development. This Arabidopsis thaliana (Mouse-ear cress) protein is S-adenosylmethionine decarboxylase proenzyme 2.